The chain runs to 307 residues: Aspartate carbamoyltransferase catalytic subunit (307 aa).

Carbamoyl phosphate is bound by residues Arg54 and Thr55. Lys83 is an L-aspartate binding site. 3 residues coordinate carbamoyl phosphate: Arg104, His132, and Gln135. Arg165 and Arg228 together coordinate L-aspartate. Leu267 and Pro268 together coordinate carbamoyl phosphate.

Belongs to the aspartate/ornithine carbamoyltransferase superfamily. ATCase family. Heterododecamer (2C3:3R2) of six catalytic PyrB chains organized as two trimers (C3), and six regulatory PyrI chains organized as three dimers (R2).

The enzyme catalyses carbamoyl phosphate + L-aspartate = N-carbamoyl-L-aspartate + phosphate + H(+). Its pathway is pyrimidine metabolism; UMP biosynthesis via de novo pathway; (S)-dihydroorotate from bicarbonate: step 2/3. In terms of biological role, catalyzes the condensation of carbamoyl phosphate and aspartate to form carbamoyl aspartate and inorganic phosphate, the committed step in the de novo pyrimidine nucleotide biosynthesis pathway. The sequence is that of Aspartate carbamoyltransferase catalytic subunit from Clostridium botulinum (strain Okra / Type B1).